We begin with the raw amino-acid sequence, 547 residues long: Elongator complex protein 3 (547 aa).

The Radical SAM core domain occupies Arg82–Pro372. 3 residues coordinate [4Fe-4S] cluster: Cys99, Cys109, and Cys112. Position 161 is a phosphoserine (Ser161). Lys164 provides a ligand contact to acetyl-CoA. Tyr202 bears the Phosphotyrosine; by ALK mark. Lys229 is subject to N6-methyllysine. Tyr251 carries the phosphotyrosine modification. The N-acetyltransferase domain maps to Ile396 to Lys547. Acetyl-CoA contacts are provided by residues Glu474 to Val477, Phe497 to Met499, and Tyr530.

It belongs to the ELP3 family. As to quaternary structure, component of the elongator complex which consists of ELP1, ELP2, ELP3, ELP4, ELP5 and ELP6. ELP1, ELP2 and ELP3 form the elongator core complex. Interacts with alpha-tubulin. It depends on [4Fe-4S] cluster as a cofactor. Tyrosine-phosphorylated; phosphorylation on Tyr-202 does not affect elongator complex integrity or ELP3 protein stability. Also serine/threonine-phosphorylated. As to expression, expressed in the cerebellum and spinal motor neurons.

It is found in the cytoplasm. It localises to the nucleus. The catalysed reaction is uridine(34) in tRNA + acetyl-CoA + S-adenosyl-L-methionine + H2O = 5-(carboxymethyl)uridine(34) in tRNA + 5'-deoxyadenosine + L-methionine + CoA + 2 H(+). It functions in the pathway tRNA modification; 5-methoxycarbonylmethyl-2-thiouridine-tRNA biosynthesis. Catalytic tRNA acetyltransferase subunit of the elongator complex which is required for multiple tRNA modifications, including mcm5U (5-methoxycarbonylmethyl uridine), mcm5s2U (5-methoxycarbonylmethyl-2-thiouridine), and ncm5U (5-carbamoylmethyl uridine). In the elongator complex, acts as a tRNA uridine(34) acetyltransferase by mediating formation of carboxymethyluridine in the wobble base at position 34 in tRNAs. May also act as a protein lysine acetyltransferase by mediating acetylation of target proteins; such activity is however unclear in vivo and recent evidences suggest that ELP3 primarily acts as a tRNA acetyltransferase. Involved in neurogenesis: regulates the migration and branching of projection neurons in the developing cerebral cortex, through a process depending on alpha-tubulin acetylation. Required for acetylation of GJA1 in the developing cerebral cortex. The chain is Elongator complex protein 3 from Homo sapiens (Human).